The following is a 67-amino-acid chain: LPS-assembly lipoprotein LptM (67 aa).

Residues 1 to 19 form the signal peptide; it reads MKNVFKALTVLLTLFSLTG. The N-palmitoyl cysteine moiety is linked to residue Cys-20. The S-diacylglycerol cysteine moiety is linked to residue Cys-20. The segment at 26–67 is disordered; the sequence is LYFPPADKNAPPPTKPVETQTQSTVPDKNDRATGDGPSQVNY. Positions 42–51 are enriched in polar residues; the sequence is VETQTQSTVP.

The protein belongs to the LptM family. In terms of assembly, interacts with the outer membrane embedded portion of the LPS translocon formed by LptD and LptE (LptDE).

Its subcellular location is the cell outer membrane. Component of the lipopolysaccharide (LPS) transport (Lpt) pathway that promotes efficient assembly of the outer membrane LPS translocon (LptDE) by the BAM complex. Facilitates oxidative maturation of LptD by stabilizing a conformation of the LPS translocon in which LptD can efficiently acquire native disulfide bonds, thereby activating the LPS translocon. The polypeptide is LPS-assembly lipoprotein LptM (Escherichia coli O157:H7).